We begin with the raw amino-acid sequence, 343 residues long: Putative outer membrane protein y4fJ (343 aa).

A signal peptide spans 1–17 (MRMNFSTVLLGSSVALA).

The protein belongs to the alphaproteobacteria porin family.

The protein resides in the cell outer membrane. Functionally, may act as an outer membrane pore. In Sinorhizobium fredii (strain NBRC 101917 / NGR234), this protein is Putative outer membrane protein y4fJ.